The chain runs to 127 residues: Venom protein family 16 protein 1 (127 aa).

The first 18 residues, 1–18, serve as a signal peptide directing secretion; the sequence is MWIWYSLLFFGVCHLAHS.

As to expression, expressed by the venom gland (anterior main gland) (at protein level).

The protein resides in the secreted. This chain is Venom protein family 16 protein 1, found in Platymeris rhadamanthus (Red spot assassin bug).